A 1415-amino-acid polypeptide reads, in one-letter code: Zygote defective protein 9 (1415 aa).

TOG stretches follow at residues 1-250 (MSNW…AKNA) and 251-530 (PPVA…AGPA). Residues 21-48 (DELRESKKWQERKEALEALLKVLTDNER) are a coiled coil. HEAT repeat units lie at residues 30–68 (QERK…VLAK), 95–132 (SFAG…TMQS), 135–172 (TGQE…AKQP), and 179–217 (VVPV…VKNL). The tract at residues 243–278 (AEEQAKNAPPVAPTSSTPSASAASGDPSGGTATAVV) is disordered. The segment covering 255 to 276 (PTSSTPSASAASGDPSGGTATA) has biased composition (low complexity). HEAT repeat units lie at residues 339 to 377 (ANYG…GLRT), 381 to 418 (PFAV…TTNL), 420 to 457 (AVGE…QTMP), and 464 to 502 (LIPS…SLQL). The tract at residues 544 to 603 (APPAAAPPKKTAPPKKQPEDEEVVEEEDEPLKPPPGDKKKKVPVKENEENEPPVVAPKAE) is disordered. Acidic residues predominate over residues 562–572 (EDEEVVEEEDE). Residues 602 to 867 (AELLLSDNED…VEERIKRTGV (266 aa)) form a TOG 3 region. HEAT repeat units lie at residues 706–743 (IKVL…LKTG), 764–801 (VGPL…NAGI), and 804–841 (LKSL…FEGD). The interval 867–914 (VKPGSGVVTSPPTGGPKILVPQQQGSVVRRPASRSRTREPEPEEVQSD) is disordered.

It belongs to the TOG/XMAP215 family. Interacts with tac-1 to form a heterodimer.

Its subcellular location is the cytoplasm. The protein resides in the cytoskeleton. It is found in the spindle pole. It localises to the microtubule organizing center. The protein localises to the centrosome. In terms of biological role, plays a major role in organizing microtubules and spindle poles during mitosis and meiosis in one-cell stage embryos. Required for default nucleus positioning in oocytes. The protein is Zygote defective protein 9 of Caenorhabditis elegans.